Here is a 258-residue protein sequence, read N- to C-terminus: Oxidoreductase fscI (258 aa).

NADP(+)-binding residues include leucine 34, arginine 59, aspartate 82, asparagine 109, and lysine 141. Residue serine 163 is the Proton donor of the active site. Arginine 193 is an NADP(+) binding site.

The protein belongs to the short-chain dehydrogenases/reductases (SDR) family.

It participates in secondary metabolite biosynthesis. In terms of biological role, oxidoreductase; part of the fragmented gene cluster that mediates the biosynthesis of fusarochromene, a tryptophan-derived metabolite closely related to a group of mycotoxins including fusarochromanone. Within the pathway, fscI catalyzes the formation of the chromene ring from the prenyl moity added by the prenyltransferase fscG. The first step of the pathway is the epimerization of L-tryptophan to D-tryptophan in the presence of the NRPS-like tryptophan epimerase fscC. D-tryptophan is subsequently hydroxylated by the tryptophan 6-hydroxylase fscE to yield 6-hydroxytryptophan. The pyrrole ring undergoes cleavaged by the tryptophan 2,3-dioxygenase fscD and is finally converted to 4-hydroxykyrunenine by the hydrolase fscH. The NRPS-like oxidoreductase fscA reduces the carboxyl group to primary alcohol and the DMATS-type prenyltransferase fscG performs prenylation, followed by the formation of a chromene ring catalyzed by the oxidoreductase fscI, which leads to desacetylfusarochromene. Epoxidation by fscF and rearrangement reactions of chromene double bonds convert compound desacetylfusarochromene to fusarochromanones. Although specific acetyltransferases were not found near the fsc gene cluster, several predicted enzymes containing the N-acetyltransferase superfamily domain are present in the genome of F.equiseti. These predicted enzymes may have the potential to convert desacetylfusarochromene to fusarochromene. The polypeptide is Oxidoreductase fscI (Fusarium equiseti (Fusarium scirpi)).